Consider the following 316-residue polypeptide: D-alanine--D-alanine ligase (316 aa).

The region spanning 112 to 310 (KTALKAHGLP…FGKLCRWLVE (199 aa)) is the ATP-grasp domain. Residue 139–189 (MATPYVVKPNNEGSSVGVYLVNEAANGPPHLSDDMPDEVMVETYAPGRELT) coordinates ATP. Mg(2+) contacts are provided by Asp261, Glu277, and Asn279.

It belongs to the D-alanine--D-alanine ligase family. Requires Mg(2+) as cofactor. It depends on Mn(2+) as a cofactor.

Its subcellular location is the cytoplasm. It catalyses the reaction 2 D-alanine + ATP = D-alanyl-D-alanine + ADP + phosphate + H(+). It participates in cell wall biogenesis; peptidoglycan biosynthesis. Functionally, cell wall formation. This chain is D-alanine--D-alanine ligase, found in Jannaschia sp. (strain CCS1).